Here is a 308-residue protein sequence, read N- to C-terminus: tRNA dimethylallyltransferase (308 aa).

Residue 9-16 (GPTAAGKT) participates in ATP binding. 11–16 (TAAGKT) serves as a coordination point for substrate. Interaction with substrate tRNA regions lie at residues 34–37 (DSMQ) and 158–162 (QRLLR).

It belongs to the IPP transferase family. In terms of assembly, monomer. It depends on Mg(2+) as a cofactor.

The enzyme catalyses adenosine(37) in tRNA + dimethylallyl diphosphate = N(6)-dimethylallyladenosine(37) in tRNA + diphosphate. Catalyzes the transfer of a dimethylallyl group onto the adenine at position 37 in tRNAs that read codons beginning with uridine, leading to the formation of N6-(dimethylallyl)adenosine (i(6)A). This chain is tRNA dimethylallyltransferase, found in Maricaulis maris (strain MCS10) (Caulobacter maris).